The following is a 360-amino-acid chain: S-adenosylmethionine-dependent nucleotide dehydratase RSAD2 (360 aa).

Positions 44 to 71 are disordered; it reads KGQPRVRGEPKETQETHEDPGSAQPTTP. A compositionally biased stretch (basic and acidic residues) spans 49-63; that stretch reads VRGEPKETQETHEDP. A Radical SAM core domain is found at 68–288; sequence PTTPVSVNYH…LQRHKDVSCL (221 aa). Residues Cys82, Cys86, and Cys89 each coordinate [4Fe-4S] cluster. An N6-acetyllysine modification is found at Lys196. Lys205 is covalently cross-linked (Glycyl lysine isopeptide (Lys-Gly) (interchain with G-Cter in ubiquitin)).

This sequence belongs to the radical SAM superfamily. RSAD2 family. In terms of assembly, homodimer. Interacts with IRAK1 and TRAF6. Interacts with FPPS. Interacts with HADHB. Interacts (via C-terminus) with VAPA/VAP33 (via C-terminus). It depends on [4Fe-4S] cluster as a cofactor. Acetylated by HAT1. HAT1-mediated acetylation of Lys-196 in turn recruits UBE4A that stimulates RSAD2 polyubiquitination leading to proteasomal degradation. Post-translationally, 'Lys-6'-linked polyubiquitination at Lys-205 leads to RSAD2 protein degradation. In terms of tissue distribution, in neonatal rat tibia, specifically localized in cells of the periosteum, in osteoblasts lining endosteal and peristeal bone surfaces, to articular surfaces of cartilage and in perichondral cells but not in chondrocytes (at protein level). Expressed predominantly in bone marrow and spleen.

The protein localises to the endoplasmic reticulum membrane. Its subcellular location is the golgi apparatus. It is found in the endoplasmic reticulum. It localises to the lipid droplet. The protein resides in the mitochondrion. The protein localises to the mitochondrion inner membrane. Its subcellular location is the mitochondrion outer membrane. The enzyme catalyses CTP + AH2 + S-adenosyl-L-methionine = 3'-deoxy-3',4'-didehydro-CTP + 5'-deoxyadenosine + L-methionine + A + H2O + H(+). With respect to regulation, IRAK1 and TRAF6 synergistically activate RSAD2 increasing its activity with CTP as substrate about 10-fold. Functionally, interferon-inducible antiviral protein which plays a major role in the cell antiviral state induced by type I and type II interferon. Catalyzes the conversion of cytidine triphosphate (CTP) to 3'-deoxy-3',4'-didehydro-CTP (ddhCTP) via a SAM-dependent radical mechanism. In turn, ddhCTP acts as a chain terminator for the RNA-dependent RNA polymerases from multiple viruses and directly inhibits viral replication. Therefore, inhibits a wide range of DNA and RNA viruses. Also promotes TLR7 and TLR9-dependent production of IFN-beta production in plasmacytoid dendritic cells (pDCs) by facilitating 'Lys-63'-linked ubiquitination of IRAK1 by TRAF6. Plays a role in CD4+ T-cells activation and differentiation. Facilitates T-cell receptor (TCR)-mediated GATA3 activation and optimal T-helper 2 (Th2) cytokine production by modulating NFKB1 and JUNB activities. Can inhibit secretion of soluble proteins. In Rattus norvegicus (Rat), this protein is S-adenosylmethionine-dependent nucleotide dehydratase RSAD2.